The chain runs to 268 residues: Putative hydro-lyase PSPTO_5379 (268 aa).

Belongs to the D-glutamate cyclase family.

The chain is Putative hydro-lyase PSPTO_5379 from Pseudomonas syringae pv. tomato (strain ATCC BAA-871 / DC3000).